Reading from the N-terminus, the 244-residue chain is Lactate utilization protein A (244 aa).

This sequence belongs to the LutA/YkgE family.

Its function is as follows. Is involved in L-lactate degradation and allows cells to grow with lactate as the sole carbon source. The chain is Lactate utilization protein A from Oceanobacillus iheyensis (strain DSM 14371 / CIP 107618 / JCM 11309 / KCTC 3954 / HTE831).